A 316-amino-acid chain; its full sequence is Ribosomal RNA large subunit methyltransferase F (316 aa).

It belongs to the methyltransferase superfamily. METTL16/RlmF family.

It is found in the cytoplasm. It carries out the reaction adenosine(1618) in 23S rRNA + S-adenosyl-L-methionine = N(6)-methyladenosine(1618) in 23S rRNA + S-adenosyl-L-homocysteine + H(+). Its function is as follows. Specifically methylates the adenine in position 1618 of 23S rRNA. In Pseudomonas entomophila (strain L48), this protein is Ribosomal RNA large subunit methyltransferase F.